Here is a 293-residue protein sequence, read N- to C-terminus: Proline iminopeptidase (293 aa).

Residues 28 to 277 (KPLVLLHGGP…YSRHMPFVEE (250 aa)) enclose the AB hydrolase-1 domain. Ser-104 serves as the catalytic Nucleophile. Residue Asp-244 is part of the active site. Catalysis depends on His-271, which acts as the Proton donor.

It belongs to the peptidase S33 family.

The catalysed reaction is Release of N-terminal proline from a peptide.. Its function is as follows. Releases the N-terminal proline from various substrates. The chain is Proline iminopeptidase from Clostridioides difficile (strain 630) (Peptoclostridium difficile).